The following is a 193-amino-acid chain: Ion-translocating oxidoreductase complex subunit A (193 aa).

The next 6 membrane-spanning stretches (helical) occupy residues 5–25 (LLLFVGTVLVNNFVLVKFLGL), 39–59 (IGMGLATTFVLTLASVCAWMV), 62–82 (FILLPLGLVYLRTLAFILVIA), 102–122 (LLGIFLPLITTNCAVLGVALL), 134–154 (AVYGFSAAAGFSLVMVLFAAI), and 171–191 (SIALITAGLMSLAFMGFTGLV).

This sequence belongs to the NqrDE/RnfAE family. As to quaternary structure, the complex is composed of six subunits: RnfA, RnfB, RnfC, RnfD, RnfE and RnfG.

It localises to the cell inner membrane. Functionally, part of a membrane-bound complex that couples electron transfer with translocation of ions across the membrane. In Yersinia enterocolitica serotype O:8 / biotype 1B (strain NCTC 13174 / 8081), this protein is Ion-translocating oxidoreductase complex subunit A.